Here is a 708-residue protein sequence, read N- to C-terminus: Lactotransferrin (708 aa).

The signal sequence occupies residues methionine 1 to alanine 19. 2 consecutive Transferrin-like domains span residues valine 25–glutamate 352 and valine 364–arginine 693. 2 cysteine pairs are disulfide-bonded: cysteine 28-cysteine 64 and cysteine 38-cysteine 55. Residues arginine 44–proline 51 are interaction with E.coli ompC. Aspartate 79 lines the Fe(3+) pocket. Lysine 92 is a catalytic residue. Tyrosine 111 is a binding site for Fe(3+). Disulfide bonds link cysteine 134/cysteine 217, cysteine 176/cysteine 192, cysteine 179/cysteine 202, cysteine 189/cysteine 200, and cysteine 250/cysteine 264. The hydrogencarbonate site is built by threonine 136, arginine 140, alanine 142, and glycine 143. Tyrosine 211 contacts Fe(3+). The N-linked (GlcNAc...) asparagine glycan is linked to asparagine 252. Histidine 272 serves as a coordination point for Fe(3+). Residue serine 278 is the Nucleophile of the active site. 2 cysteine pairs are disulfide-bonded: cysteine 367/cysteine 399 and cysteine 377/cysteine 390. An N-linked (GlcNAc...) asparagine glycan is attached at asparagine 385. Residues aspartate 414 and tyrosine 452 each coordinate Fe(3+). Disulfide bonds link cysteine 424–cysteine 703, cysteine 444–cysteine 666, cysteine 476–cysteine 551, cysteine 500–cysteine 694, cysteine 510–cysteine 524, cysteine 521–cysteine 534, cysteine 592–cysteine 606, and cysteine 644–cysteine 649. Hydrogencarbonate contacts are provided by threonine 478, arginine 482, alanine 484, and glycine 485. Asparagine 537 carries N-linked (GlcNAc...) asparagine glycosylation. Tyrosine 545 contacts Fe(3+). The N-linked (GlcNAc...) asparagine glycan is linked to asparagine 594. Histidine 614 contributes to the Fe(3+) binding site.

This sequence belongs to the transferrin family. As to quaternary structure, monomer. Found in a complex with LTF, CLU, EPPIN and SEMG1. Interacts with E.coli outer membrane protein C (OmpC). Found in a complex with MPO and LTF; interacts directly with CP, allows Fe(3+) incorporation into LTF and activation of CP ferroxidase activity. Post-translationally, poly-N-acetyllactosaminic carbohydrate moiety seems to be needed for TLR4 activation.

It is found in the secreted. Its subcellular location is the cytoplasmic granule. In terms of biological role, transferrins are iron binding transport proteins which can bind two Fe(3+) ions in association with the binding of an anion, usually bicarbonate. Functionally, major iron-binding and multifunctional protein found in exocrine fluids such as breast milk and mucosal secretions. Has antimicrobial activity, which depends on the extracellular cation concentration. Antimicrobial properties include bacteriostasis, which is related to its ability to sequester free iron and thus inhibit microbial growth, as well as direct bactericidal properties leading to the release of lipopolysaccharides from the bacterial outer membrane. Can also prevent bacterial biofilm development in P.aeruginosa infection. Has weak antifungal activity against C.albicans. Has anabolic, differentiating and anti-apoptotic effects on osteoblasts and can also inhibit osteoclastogenesis, possibly playing a role in the regulation of bone growth. Promotes binding of species C adenoviruses to epithelial cells, promoting adenovirus infection. Can inhibit papillomavirus infections. Stimulates the TLR4 signaling pathway leading to NF-kappa-B activation and subsequent pro-inflammatory cytokine production while also interfering with the lipopolysaccharide (LPS)-stimulated TLR4 signaling. Inhibits neutrophil granulocyte migration to sites of apoptosis, when secreted by apoptotic cells. Stimulates VEGFA-mediated endothelial cell migration and proliferation. Binds heparin, chondroitin sulfate and possibly other glycosaminoglycans (GAGs). Also binds specifically to pneumococcal surface protein A (PspA), the lipid A portion of bacterial lipopolysaccharide (LPS), lysozyme and DNA. Lactoferricin binds to the bacterial surface and is crucial for the bactericidal functions. Has some antiviral activity against papillomavirus infection. N-terminal region shows strong antifungal activity against C.albicans. Contains two BBXB heparin-binding consensus sequences that appear to form the predominate functional GAG-binding site. Its function is as follows. The lactotransferrin transferrin-like domain 1 functions as a serine protease of the peptidase S60 family that cuts arginine rich regions. This function contributes to the antimicrobial activity. Shows a preferential cleavage at -Arg-Ser-Arg-Arg-|- and -Arg-Arg-Ser-Arg-|-, and of Z-Phe-Arg-|-aminomethylcoumarin sites. This is Lactotransferrin (LTF) from Camelus dromedarius (Dromedary).